The chain runs to 69 residues: Large ribosomal subunit protein bL31 (69 aa).

Positions 16, 18, 38, and 41 each coordinate Zn(2+).

Belongs to the bacterial ribosomal protein bL31 family. Type A subfamily. Part of the 50S ribosomal subunit. Requires Zn(2+) as cofactor.

Binds the 23S rRNA. This is Large ribosomal subunit protein bL31 from Cutibacterium acnes (strain DSM 16379 / KPA171202) (Propionibacterium acnes).